The primary structure comprises 2185 residues: DNA polymerase epsilon catalytic subunit A (2185 aa).

Residues cysteine 2072, cysteine 2075, cysteine 2094, and cysteine 2097 each contribute to the Zn(2+) site. The CysA-type zinc-finger motif lies at 2072–2097 (CEHCSYISDIDICRESMERVFICQSC). [4Fe-4S] cluster is bound by residues cysteine 2128, cysteine 2131, cysteine 2143, and cysteine 2145. The CysB motif signature appears at 2128 to 2145 (CNKCHKIKEDAMSPYCPC).

The protein belongs to the DNA polymerase type-B family. As to quaternary structure, heterotetramer. Consists of 4 subunits: POL2, DPB2, DPB3 and DPB4. [4Fe-4S] cluster serves as cofactor.

It localises to the nucleus. The enzyme catalyses DNA(n) + a 2'-deoxyribonucleoside 5'-triphosphate = DNA(n+1) + diphosphate. In terms of biological role, DNA polymerase II participates in chromosomal DNA replication. This chain is DNA polymerase epsilon catalytic subunit A (POL2), found in Kluyveromyces lactis (strain ATCC 8585 / CBS 2359 / DSM 70799 / NBRC 1267 / NRRL Y-1140 / WM37) (Yeast).